We begin with the raw amino-acid sequence, 340 residues long: Replication factor C subunit 3 (340 aa).

N-acetylserine is present on S2. Residues 16–19, R20, Y28, 53–61, N148, and R206 each bind ATP; these read VEKY and GPPGTGKTS.

The protein belongs to the activator 1 small subunits family. Replication factor C (RFC) is a heteropentamer of subunits RFC1, RFC2, RFC3, RFC4 and RFC5 and forms a complex with POL30/PCNA in the presence of ATP. Component of the RAD24-RFC complex which consists of RAD14, RFC2, RFC3, RFC4 and RFC5 and associates with the checkpoint clamp DDC1:MEC3:RAD17 complex. Component of the ELG1-RFC complex which consists of ELG1, RFC2, RFC3, RFC4 and RFC5. Component of the CTF18-RFC complex, which consists of CTF18, CTF8, DCC1, RFC2, RFC3, RFC4 and RFC5. RFC3 interacts with ECO1 and POL30/PCNA.

The protein resides in the nucleus. In terms of biological role, component of ATP-dependent clamp loader (RFC and RFC-like) complexes for DNA clamps, such as the POL30/PCNA homotrimer and the checkpoint clamp DDC1:MEC3:RAD17 complex. During a clamp loading circle, the RFC:clamp complex binds to DNA and the recognition of the double-stranded/single-stranded junction stimulates ATP hydrolysis by RFC. The complex presumably provides bipartite ATP sites in which one subunit supplies a catalytic site for hydrolysis of ATP bound to the neighboring subunit. Dissociation of RFC from the clamp leaves the clamp encircling DNA. Component of the replication factor C (RFC or activator 1) complex which loads POL30/PCNA and acts during elongation of primed DNA templates by DNA polymerase delta and epsilon. RFC has an essential but redundant activity in sister chromatid cohesion establishment. Component of the RFC-like complex CTF18-RFC which is required for efficient establishment of chromosome cohesion during S-phase and may load or unload POL30/PCNA. Component of the RFC-like RAD24-RFC complex which loads the checkpoint clamp DDC1:MEC3:RAD17 complex and is involved in DNA repair pathways. Component of the RFC-like ELG1-RFC complex which appears to have a role in DNA replication, replication fork re-start, recombination and repair. RFC3 supplies a catalytic site to the ATP site of RFC4. This Saccharomyces cerevisiae (strain ATCC 204508 / S288c) (Baker's yeast) protein is Replication factor C subunit 3 (RFC3).